We begin with the raw amino-acid sequence, 398 residues long: Dual specificity protein phosphatase 4 (398 aa).

An N-acetylvaline modification is found at V2. A Rhodanese domain is found at 45–163 (SGGKCLLLDC…FSSEYPEFCS (119 aa)). The region spanning 199-340 (GPVEILPFLY…LLQFESQVLT (142 aa)) is the Tyrosine-protein phosphatase domain. The Phosphocysteine intermediate role is filled by C284. S390 and S395 each carry phosphoserine; by MAPK.

It belongs to the protein-tyrosine phosphatase family. Non-receptor class dual specificity subfamily. Hollow spherical complex composed of 24 subunits with pseudooctahedral symmetry, has a tetramer as the basic unit. In terms of processing, phosphorylation in the C-terminus by ERK1/2 inhibits proteasomal degradation and stabilizes the protein.

The protein resides in the nucleus. It catalyses the reaction O-phospho-L-tyrosyl-[protein] + H2O = L-tyrosyl-[protein] + phosphate. The enzyme catalyses O-phospho-L-seryl-[protein] + H2O = L-seryl-[protein] + phosphate. It carries out the reaction O-phospho-L-threonyl-[protein] + H2O = L-threonyl-[protein] + phosphate. Its function is as follows. Regulates mitogenic signal transduction by dephosphorylating both Thr and Tyr residues on MAP kinases ERK1 and ERK2. In Mus musculus (Mouse), this protein is Dual specificity protein phosphatase 4 (Dusp4).